Here is a 141-residue protein sequence, read N- to C-terminus: MSIERTLSIIKPDAVAKNVVGQIVARFEQAGLKVIAARMQQLSRTDAERFYAVHKERPFFKDLVDFMVSGPVFVQVLEGESAIQKNRDLMGATDPKKAAPGTIRADFADSIDANAVHGSDAPETAAVEVAFFFPEINIHSR.

Positions 11, 59, 87, 93, 104, and 114 each coordinate ATP. H117 acts as the Pros-phosphohistidine intermediate in catalysis.

This sequence belongs to the NDK family. As to quaternary structure, homotetramer. Mg(2+) is required as a cofactor.

The protein resides in the cytoplasm. It carries out the reaction a 2'-deoxyribonucleoside 5'-diphosphate + ATP = a 2'-deoxyribonucleoside 5'-triphosphate + ADP. The catalysed reaction is a ribonucleoside 5'-diphosphate + ATP = a ribonucleoside 5'-triphosphate + ADP. In terms of biological role, major role in the synthesis of nucleoside triphosphates other than ATP. The ATP gamma phosphate is transferred to the NDP beta phosphate via a ping-pong mechanism, using a phosphorylated active-site intermediate. This is Nucleoside diphosphate kinase from Bordetella bronchiseptica (strain ATCC BAA-588 / NCTC 13252 / RB50) (Alcaligenes bronchisepticus).